We begin with the raw amino-acid sequence, 260 residues long: MALRRPMVAGNWKMNGNSALAEELFKKFATKLQNDSAEVVLCPPSIYLESVRQLLEANKQTLDGALVRMGAQNLSQHDFGAYTGEISGQMLKDSGCRYVIIGHSERRRMYGETSNIVAEKFAAAQKYGLTPILCVGESGPAREARRTFEVIAEELDIVIEKNGTMAFDNAIIAYEPLWAVGTGKSATPEQAQEVHAFIRSRLSEVSPFIGENIRILYGGSVTPSNAADIFAQPDVDGGLIGGASLNSSEFLSLCTIAMSA.

A substrate-binding site is contributed by 11-13 (NWK). Histidine 103 (electrophile) is an active-site residue. Catalysis depends on glutamate 175, which acts as the Proton acceptor. Substrate contacts are provided by residues glycine 181, serine 220, and 241–242 (GG).

This sequence belongs to the triosephosphate isomerase family. Homodimer.

It is found in the cytoplasm. The enzyme catalyses D-glyceraldehyde 3-phosphate = dihydroxyacetone phosphate. It participates in carbohydrate biosynthesis; gluconeogenesis. It functions in the pathway carbohydrate degradation; glycolysis; D-glyceraldehyde 3-phosphate from glycerone phosphate: step 1/1. Functionally, involved in the gluconeogenesis. Catalyzes stereospecifically the conversion of dihydroxyacetone phosphate (DHAP) to D-glyceraldehyde-3-phosphate (G3P). The sequence is that of Triosephosphate isomerase from Shewanella frigidimarina (strain NCIMB 400).